Reading from the N-terminus, the 118-residue chain is Autophagy-related protein 8D (118 aa).

The Phosphatidylethanolamine amidated glycine moiety is linked to residue G118.

It belongs to the ATG8 family. As to quaternary structure, interacts with ATG4. In terms of processing, the C-terminal Gly is amidated with phosphatidylethanolamine by an activating system similar to that for ubiquitin.

It localises to the cytoplasmic vesicle. The protein localises to the autophagosome membrane. The protein resides in the vacuole membrane. Its subcellular location is the cytoplasm. It is found in the cytoskeleton. Functionally, ubiquitin-like modifier involved in autophagosomes formation. May mediate the delivery of the autophagosomes to the vacuole via the microtubule cytoskeleton. The chain is Autophagy-related protein 8D (ATG8D) from Oryza sativa subsp. japonica (Rice).